Consider the following 360-residue polypeptide: Peptide chain release factor 1 (360 aa).

Glutamine 235 carries the post-translational modification N5-methylglutamine. Residues 285–304 (KRQQEEASTRRNLLGSGDRS) form a disordered region.

It belongs to the prokaryotic/mitochondrial release factor family. Methylated by PrmC. Methylation increases the termination efficiency of RF1.

Its subcellular location is the cytoplasm. Functionally, peptide chain release factor 1 directs the termination of translation in response to the peptide chain termination codons UAG and UAA. This Edwardsiella ictaluri (strain 93-146) protein is Peptide chain release factor 1.